Reading from the N-terminus, the 874-residue chain is Alanine--tRNA ligase (874 aa).

Residues His-562, His-566, Cys-664, and His-668 each coordinate Zn(2+).

This sequence belongs to the class-II aminoacyl-tRNA synthetase family. It depends on Zn(2+) as a cofactor.

It localises to the cytoplasm. The catalysed reaction is tRNA(Ala) + L-alanine + ATP = L-alanyl-tRNA(Ala) + AMP + diphosphate. In terms of biological role, catalyzes the attachment of alanine to tRNA(Ala) in a two-step reaction: alanine is first activated by ATP to form Ala-AMP and then transferred to the acceptor end of tRNA(Ala). Also edits incorrectly charged Ser-tRNA(Ala) and Gly-tRNA(Ala) via its editing domain. This is Alanine--tRNA ligase from Shewanella halifaxensis (strain HAW-EB4).